A 218-amino-acid chain; its full sequence is uncharacterized protein (218 aa).

This sequence belongs to the mimivirus L6/L7/L57 family.

This is an uncharacterized protein from Acanthamoeba polyphaga mimivirus (APMV).